We begin with the raw amino-acid sequence, 335 residues long: Glucokinase (335 aa).

ATP is bound at residue 11-16 (ADIGGT).

Belongs to the bacterial glucokinase family.

The protein localises to the cytoplasm. It catalyses the reaction D-glucose + ATP = D-glucose 6-phosphate + ADP + H(+). This Stenotrophomonas maltophilia (strain K279a) protein is Glucokinase.